The chain runs to 355 residues: Phospho-N-acetylmuramoyl-pentapeptide-transferase (355 aa).

10 helical membrane-spanning segments follow: residues 3–23 (GVLI…PWVI), 56–76 (VIIV…GIGF), 80–100 (GLLV…DDYI), 120–140 (AAVA…AGLL), 156–176 (VGII…SNAV), 185–205 (LAAG…FWQF), 224–244 (PLDV…FLWW), 251–271 (IFMG…IAIV), 276–296 (LLLV…MIQV), and 330–350 (FWIV…AEFL).

Belongs to the glycosyltransferase 4 family. MraY subfamily. Mg(2+) serves as cofactor.

It localises to the cell membrane. It catalyses the reaction UDP-N-acetyl-alpha-D-muramoyl-L-alanyl-gamma-D-glutamyl-meso-2,6-diaminopimeloyl-D-alanyl-D-alanine + di-trans,octa-cis-undecaprenyl phosphate = di-trans,octa-cis-undecaprenyl diphospho-N-acetyl-alpha-D-muramoyl-L-alanyl-D-glutamyl-meso-2,6-diaminopimeloyl-D-alanyl-D-alanine + UMP. It functions in the pathway cell wall biogenesis; peptidoglycan biosynthesis. In terms of biological role, catalyzes the initial step of the lipid cycle reactions in the biosynthesis of the cell wall peptidoglycan: transfers peptidoglycan precursor phospho-MurNAc-pentapeptide from UDP-MurNAc-pentapeptide onto the lipid carrier undecaprenyl phosphate, yielding undecaprenyl-pyrophosphoryl-MurNAc-pentapeptide, known as lipid I. This chain is Phospho-N-acetylmuramoyl-pentapeptide-transferase, found in Frankia casuarinae (strain DSM 45818 / CECT 9043 / HFP020203 / CcI3).